The chain runs to 827 residues: Xanthomonalisin (827 aa).

Residues 1–23 (MKIEKTALTVAIALAMSSLSAHA) form the signal peptide. Residues 24 to 237 (EDAWVSTHTQ…GPNVGTQAAA (214 aa)) constitute a propeptide, removed in mature form. Residues 241–625 (AHHPQDFAAI…GKLNTYAQAN (385 aa)) form the Peptidase S53 domain. Active-site charge relay system residues include glutamate 312, aspartate 316, and serine 544. Residues aspartate 585, valine 586, alanine 601, glycine 603, and aspartate 605 each coordinate Ca(2+). The PKD domain maps to 635 to 722 (TNAPPVANFS…VTVSSSGGTG (88 aa)). Positions 636-827 (NAPPVANFSV…GVSLKATWTN (192 aa)) are cleaved as a propeptide — removed in mature form.

Ca(2+) is required as a cofactor. Autocatalytically processed.

The protein localises to the secreted. It catalyses the reaction Cleavage of casein.. With respect to regulation, inhibited by 1,2-epoxy-3-(p-nitrophenoxy)propane (EPNP), but not by pepstatin, pepstatin Ac (S-PI) and diazoacetyl-DL-norleucine methyl ester (DAN). Not inhibited by metal ions. Functionally, pepstatin-insensitive serine-carboxyl proteinase. Shows activity on acid-denatured hemoglobin and on casein. The sequence is that of Xanthomonalisin from Xanthomonas sp. (strain T-22).